A 142-amino-acid polypeptide reads, in one-letter code: Large ribosomal subunit protein uL11 (142 aa).

The protein belongs to the universal ribosomal protein uL11 family. As to quaternary structure, part of the ribosomal stalk of the 50S ribosomal subunit. Interacts with L10 and the large rRNA to form the base of the stalk. L10 forms an elongated spine to which L12 dimers bind in a sequential fashion forming a multimeric L10(L12)X complex. One or more lysine residues are methylated.

Forms part of the ribosomal stalk which helps the ribosome interact with GTP-bound translation factors. The chain is Large ribosomal subunit protein uL11 from Pectobacterium carotovorum subsp. carotovorum (strain PC1).